The sequence spans 675 residues: Methionine--tRNA ligase (675 aa).

The short motif at 12–22 (PYANGPIHLGH) is the 'HIGH' region element. 4 residues coordinate Zn(2+): Cys-143, Cys-146, Cys-156, and Cys-159. The short motif at 328–332 (KMSKS) is the 'KMSKS' region element. Lys-331 provides a ligand contact to ATP. The tRNA-binding domain occupies 574 to 675 (DFAKVDLRIA…QGAQPGMRVK (102 aa)).

The protein belongs to the class-I aminoacyl-tRNA synthetase family. MetG type 1 subfamily. As to quaternary structure, homodimer. It depends on Zn(2+) as a cofactor.

Its subcellular location is the cytoplasm. It carries out the reaction tRNA(Met) + L-methionine + ATP = L-methionyl-tRNA(Met) + AMP + diphosphate. In terms of biological role, is required not only for elongation of protein synthesis but also for the initiation of all mRNA translation through initiator tRNA(fMet) aminoacylation. This is Methionine--tRNA ligase from Alkalilimnicola ehrlichii (strain ATCC BAA-1101 / DSM 17681 / MLHE-1).